The sequence spans 289 residues: ATP synthase subunit a (289 aa).

The next 6 membrane-spanning stretches (helical) occupy residues Ala43 to Phe63, Ser101 to Val121, Leu160 to Ile180, Leu193 to Ala213, Val232 to Val252, and Ala259 to Val279.

The protein belongs to the ATPase A chain family. As to quaternary structure, F-type ATPases have 2 components, CF(1) - the catalytic core - and CF(0) - the membrane proton channel. CF(1) has five subunits: alpha(3), beta(3), gamma(1), delta(1), epsilon(1). CF(0) has three main subunits: a(1), b(2) and c(9-12). The alpha and beta chains form an alternating ring which encloses part of the gamma chain. CF(1) is attached to CF(0) by a central stalk formed by the gamma and epsilon chains, while a peripheral stalk is formed by the delta and b chains.

It is found in the cell inner membrane. Key component of the proton channel; it plays a direct role in the translocation of protons across the membrane. This is ATP synthase subunit a from Pseudomonas syringae pv. syringae (strain B728a).